Reading from the N-terminus, the 200-residue chain is MEDISTEKTVESLEAIRHRIAQIVQSLTHFLAILHQSESLSPWPTIHKNFNILLSQIHSLSNNLAAHSHTLQTTSIYPSLEFPVKEQEPLLTTLLRTKALPEVEEWEANTLQEYEASISSQPKKKEANDAYQKDQLWDQARIIFMEERENYSWFDFVTRRQESEGEFVSQRQLEIDRATEEQNANQMLTDILSFMKSGKR.

The protein belongs to the Mediator complex subunit 8 family. As to quaternary structure, component of the Mediator complex.

It localises to the nucleus. Component of the Mediator complex, a coactivator involved in the regulated transcription of nearly all RNA polymerase II-dependent genes. Mediator functions as a bridge to convey information from gene-specific regulatory proteins to the basal RNA polymerase II transcription machinery. Mediator is recruited to promoters by direct interactions with regulatory proteins and serves as a scaffold for the assembly of a functional preinitiation complex with RNA polymerase II and the general transcription factors. The sequence is that of Mediator of RNA polymerase II transcription subunit 8 (med8) from Schizosaccharomyces pombe (strain 972 / ATCC 24843) (Fission yeast).